The chain runs to 828 residues: Transcription factor SOX-6 (828 aa).

Positions 1-51 are disordered; sequence MSSKQATSPFACAADGEDAMTQDLTSREKEEGSDQHVASHLPLHPIMHNKP. The segment covering 25–34 has biased composition (basic and acidic residues); the sequence is TSREKEEGSD. Phosphothreonine is present on threonine 119. Residues 184–262 are a coiled coil; it reads LAEKERQLST…LLQQQIQVQG (79 aa). The segment at 380 to 470 is disordered; that stretch reads SPGAKMPSTP…KSSIPSPIGG (91 aa). Positions 393–402 are enriched in polar residues; that stretch reads NTAGTVSPTG. Serine 399 carries the post-translational modification Phosphoserine. Threonine 401 is modified (phosphothreonine). Residues lysine 404 and lysine 417 each participate in a glycyl lysine isopeptide (Lys-Gly) (interchain with G-Cter in SUMO) cross-link. Serine 439 and serine 442 each carry phosphoserine. The segment covering 439 to 461 has biased composition (polar residues); it reads SPTSPTQNLFPASKTSPVNLPNK. A DNA-binding region (HMG box) is located at residues 621–689; that stretch reads IKRPMNAFMV…IHLEKYPNYK (69 aa). Residues 753 to 781 are compositionally biased toward polar residues; it reads TPSPQMTSDCSSTSASPEPSLPVIQSTYG. The interval 753–828 is disordered; the sequence is TPSPQMTSDC…NEAPEAVSAN (76 aa). The segment covering 796-809 has biased composition (acidic residues); that stretch reads NGEDEMEMYDDYED.

As to quaternary structure, homodimer. Interacts with DAZAP2. May interact with CENPK. Sumoylation inhibits the transcriptional activity. In terms of tissue distribution, expressed in a wide variety of tissues, most abundantly in skeletal musclen.

The protein resides in the nucleus. The protein localises to the cytoplasm. In terms of biological role, transcription factor that plays a key role in several developmental processes, including neurogenesis, chondrocytes differentiation and cartilage formation. Specifically binds the 5'-AACAAT-3' DNA motif present in enhancers and super-enhancers and promotes expression of genes important for chondrogenesis. Required for overt chondrogenesis when condensed prechondrocytes differentiate into early stage chondrocytes: SOX5 and SOX6 cooperatively bind with SOX9 on active enhancers and super-enhancers associated with cartilage-specific genes, and thereby potentiate SOX9's ability to transactivate. Not involved in precartilaginous condensation, the first step in chondrogenesis, during which skeletal progenitors differentiate into prechondrocytes. Together with SOX5, required to form and maintain a pool of highly proliferating chondroblasts between epiphyses and metaphyses, to form columnar chondroblasts, delay chondrocyte prehypertrophy but promote hypertrophy, and to delay terminal differentiation of chondrocytes on contact with ossification fronts. Binds to the proximal promoter region of the myelin protein MPZ gene, and is thereby involved in the differentiation of oligodendroglia in the developing spinal tube. Binds to the gene promoter of MBP and acts as a transcriptional repressor. The sequence is that of Transcription factor SOX-6 from Homo sapiens (Human).